Reading from the N-terminus, the 148-residue chain is MEQTFIMIKPDGVQRGLVGEIIGRFEKKGFSLKGLKLITVDRAFAEKHYSDLSAKPFFNGLVDYIISGPVVAMVWEGKGVVTTGRKIIGATNPLESAPGTIRGDYAIDIGRNVIHGSDAVESARKEIALWFPEGVAEWQSSLHSWIYE.

Lysine 9, phenylalanine 57, arginine 85, threonine 91, arginine 102, and asparagine 112 together coordinate ATP. Catalysis depends on histidine 115, which acts as the Pros-phosphohistidine intermediate.

The protein belongs to the NDK family. It depends on Mg(2+) as a cofactor.

It carries out the reaction a 2'-deoxyribonucleoside 5'-diphosphate + ATP = a 2'-deoxyribonucleoside 5'-triphosphate + ADP. The enzyme catalyses a ribonucleoside 5'-diphosphate + ATP = a ribonucleoside 5'-triphosphate + ADP. In terms of biological role, major role in the synthesis of nucleoside triphosphates other than ATP. The ATP gamma phosphate is transferred to the NDP beta phosphate via a ping-pong mechanism, using a phosphorylated active-site intermediate. The protein is Nucleoside diphosphate kinase 1 of Nicotiana tabacum (Common tobacco).